The chain runs to 98 residues: Co-chaperonin GroES (98 aa).

The protein belongs to the GroES chaperonin family. In terms of assembly, heptamer of 7 subunits arranged in a ring. Interacts with the chaperonin GroEL.

It localises to the cytoplasm. Functionally, together with the chaperonin GroEL, plays an essential role in assisting protein folding. The GroEL-GroES system forms a nano-cage that allows encapsulation of the non-native substrate proteins and provides a physical environment optimized to promote and accelerate protein folding. GroES binds to the apical surface of the GroEL ring, thereby capping the opening of the GroEL channel. The polypeptide is Co-chaperonin GroES (Agrobacterium fabrum (strain C58 / ATCC 33970) (Agrobacterium tumefaciens (strain C58))).